A 292-amino-acid chain; its full sequence is ATP synthase gamma chain (292 aa).

This sequence belongs to the ATPase gamma chain family. In terms of assembly, F-type ATPases have 2 components, CF(1) - the catalytic core - and CF(0) - the membrane proton channel. CF(1) has five subunits: alpha(3), beta(3), gamma(1), delta(1), epsilon(1). CF(0) has three main subunits: a, b and c.

The protein localises to the cell inner membrane. In terms of biological role, produces ATP from ADP in the presence of a proton gradient across the membrane. The gamma chain is believed to be important in regulating ATPase activity and the flow of protons through the CF(0) complex. In Chlorobaculum parvum (strain DSM 263 / NCIMB 8327) (Chlorobium vibrioforme subsp. thiosulfatophilum), this protein is ATP synthase gamma chain.